Consider the following 102-residue polypeptide: Small ribosomal subunit protein uS10 (102 aa).

This sequence belongs to the universal ribosomal protein uS10 family. In terms of assembly, part of the 30S ribosomal subunit.

Involved in the binding of tRNA to the ribosomes. The polypeptide is Small ribosomal subunit protein uS10 (Heliobacterium modesticaldum (strain ATCC 51547 / Ice1)).